The following is a 230-amino-acid chain: RNA chaperone ProQ (230 aa).

Residues 106-181 (AKARVQAQRA…EERHTPVSDI (76 aa)) are disordered. Residues 146-155 (RRKDNAERKP) show a composition bias toward basic and acidic residues. The span at 158–167 (AKPAAAAKPS) shows a compositional bias: low complexity.

Belongs to the ProQ family.

Its subcellular location is the cytoplasm. In terms of biological role, RNA chaperone with significant RNA binding, RNA strand exchange and RNA duplexing activities. May regulate ProP activity through an RNA-based, post-transcriptional mechanism. This is RNA chaperone ProQ from Cronobacter sakazakii (strain ATCC BAA-894) (Enterobacter sakazakii).